We begin with the raw amino-acid sequence, 153 residues long: SsrA-binding protein (153 aa).

This sequence belongs to the SmpB family.

The protein resides in the cytoplasm. In terms of biological role, required for rescue of stalled ribosomes mediated by trans-translation. Binds to transfer-messenger RNA (tmRNA), required for stable association of tmRNA with ribosomes. tmRNA and SmpB together mimic tRNA shape, replacing the anticodon stem-loop with SmpB. tmRNA is encoded by the ssrA gene; the 2 termini fold to resemble tRNA(Ala) and it encodes a 'tag peptide', a short internal open reading frame. During trans-translation Ala-aminoacylated tmRNA acts like a tRNA, entering the A-site of stalled ribosomes, displacing the stalled mRNA. The ribosome then switches to translate the ORF on the tmRNA; the nascent peptide is terminated with the 'tag peptide' encoded by the tmRNA and targeted for degradation. The ribosome is freed to recommence translation, which seems to be the essential function of trans-translation. The polypeptide is SsrA-binding protein (Pelotomaculum thermopropionicum (strain DSM 13744 / JCM 10971 / SI)).